Consider the following 160-residue polypeptide: Cytochrome b6-f complex subunit 4 (160 aa).

The next 3 membrane-spanning stretches (helical) occupy residues 36–56 (LLYI…GLAV), 95–115 (LLGI…PFIE), and 128–148 (IAMA…IGAC).

It belongs to the cytochrome b family. PetD subfamily. The 4 large subunits of the cytochrome b6-f complex are cytochrome b6, subunit IV (17 kDa polypeptide, PetD), cytochrome f and the Rieske protein, while the 4 small subunits are PetG, PetL, PetM and PetN. The complex functions as a dimer.

The protein resides in the cellular thylakoid membrane. Its function is as follows. Component of the cytochrome b6-f complex, which mediates electron transfer between photosystem II (PSII) and photosystem I (PSI), cyclic electron flow around PSI, and state transitions. This Prochlorococcus marinus (strain MIT 9313) protein is Cytochrome b6-f complex subunit 4.